Here is a 196-residue protein sequence, read N- to C-terminus: Peroxiredoxin TSA1 (196 aa).

The 159-residue stretch at 3 to 161 (AQVQKQAPTF…ALRLVEAFQW (159 aa)) folds into the Thioredoxin domain. Lysine 14 participates in a covalent cross-link: Glycyl lysine isopeptide (Lys-Gly) (interchain with G-Cter in ubiquitin). Substrate is bound at residue 45 to 47 (TFV). The Cysteine sulfenic acid (-SOH) intermediate role is filled by cysteine 48. Lysine 89 is covalently cross-linked (Glycyl lysine isopeptide (Lys-Gly) (interchain with G-Cter in ubiquitin)). Arginine 124 contributes to the substrate binding site. Lysine 132 is covalently cross-linked (Glycyl lysine isopeptide (Lys-Gly) (interchain with G-Cter in ubiquitin)). Threonine 174 carries the post-translational modification Phosphothreonine.

Belongs to the peroxiredoxin family. AhpC/Prx1 subfamily. In terms of assembly, homodimer; disulfide-linked, upon oxidation. Interacts with YAP1 via transient disulfide linkages. Post-translationally, the enzyme can be inactivated by further oxidation of the cysteine sulfenic acid (C(P)-SOH) to sulphinic acid (C(P)-SO2H) instead of its condensation to a disulfide bond. It can be reactivated by forming a transient disulfide bond with sulfiredoxin SRX1, which reduces the cysteine sulfinic acid in an ATP- and Mg-dependent manner.

It is found in the cytoplasm. It catalyses the reaction a hydroperoxide + [thioredoxin]-dithiol = an alcohol + [thioredoxin]-disulfide + H2O. Thiol-specific peroxidase that catalyzes the reduction of hydrogen peroxide and organic hydroperoxides to water and alcohols, respectively. Plays a role in cell protection against oxidative stress by detoxifying peroxides and as sensor of hydrogen peroxide-mediated signaling events. Protects the cell against the oxidative stress caused by nascent-protein misfolding and aggregation. Relays hydrogen peroxide as a signal to the transcription factor YAP1 by inducing the formation of intramolecular disulfide bonds in YAP1, which causes its nuclear accumulation and activation. Can act alternatively as peroxidase and molecular chaperone. Oxidative stress and heat shock exposure cause a reversible shift of the protein structure from low MW species to high MW complexes, triggering a peroxidase-to-chaperone functional switch. The chaperone function of the protein enhances resistance to heat shock. This Saccharomyces cerevisiae (strain ATCC 204508 / S288c) (Baker's yeast) protein is Peroxiredoxin TSA1.